Consider the following 87-residue polypeptide: Down syndrome critical region protein 10 (87 aa).

Expressed in placenta and testis.

This Homo sapiens (Human) protein is Down syndrome critical region protein 10 (DSCR10).